Consider the following 273-residue polypeptide: ATP synthase subunit delta (273 aa).

The disordered stretch occupies residues T55–A78. The span at P57 to A78 shows a compositional bias: low complexity.

The protein belongs to the ATPase delta chain family. F-type ATPases have 2 components, F(1) - the catalytic core - and F(0) - the membrane proton channel. F(1) has five subunits: alpha(3), beta(3), gamma(1), delta(1), epsilon(1). F(0) has three main subunits: a(1), b(2) and c(10-14). The alpha and beta chains form an alternating ring which encloses part of the gamma chain. F(1) is attached to F(0) by a central stalk formed by the gamma and epsilon chains, while a peripheral stalk is formed by the delta and b chains.

It localises to the cell membrane. Functionally, f(1)F(0) ATP synthase produces ATP from ADP in the presence of a proton or sodium gradient. F-type ATPases consist of two structural domains, F(1) containing the extramembraneous catalytic core and F(0) containing the membrane proton channel, linked together by a central stalk and a peripheral stalk. During catalysis, ATP synthesis in the catalytic domain of F(1) is coupled via a rotary mechanism of the central stalk subunits to proton translocation. In terms of biological role, this protein is part of the stalk that links CF(0) to CF(1). It either transmits conformational changes from CF(0) to CF(1) or is implicated in proton conduction. The protein is ATP synthase subunit delta of Streptomyces lividans.